The sequence spans 152 residues: Endoribonuclease YbeY (152 aa).

Residues His-112, His-116, and His-122 each coordinate Zn(2+).

The protein belongs to the endoribonuclease YbeY family. It depends on Zn(2+) as a cofactor.

It localises to the cytoplasm. Functionally, single strand-specific metallo-endoribonuclease involved in late-stage 70S ribosome quality control and in maturation of the 3' terminus of the 16S rRNA. The protein is Endoribonuclease YbeY of Pseudoalteromonas translucida (strain TAC 125).